A 211-amino-acid polypeptide reads, in one-letter code: Dephospho-CoA kinase (211 aa).

One can recognise a DPCK domain in the interval 7-211; it reads LIGVIGRSGA…ILTRRGVLGE (205 aa). 15–20 contributes to the ATP binding site; the sequence is GAGKNV.

It belongs to the CoaE family.

The protein resides in the cytoplasm. It catalyses the reaction 3'-dephospho-CoA + ATP = ADP + CoA + H(+). Its pathway is cofactor biosynthesis; coenzyme A biosynthesis; CoA from (R)-pantothenate: step 5/5. Functionally, catalyzes the phosphorylation of the 3'-hydroxyl group of dephosphocoenzyme A to form coenzyme A. The protein is Dephospho-CoA kinase of Treponema pallidum (strain Nichols).